Reading from the N-terminus, the 503-residue chain is Lysine--tRNA ligase (503 aa).

2 residues coordinate Mg(2+): Glu414 and Glu421.

The protein belongs to the class-II aminoacyl-tRNA synthetase family. As to quaternary structure, homodimer. Mg(2+) is required as a cofactor.

The protein localises to the cytoplasm. It carries out the reaction tRNA(Lys) + L-lysine + ATP = L-lysyl-tRNA(Lys) + AMP + diphosphate. The protein is Lysine--tRNA ligase of Laribacter hongkongensis (strain HLHK9).